Here is an 833-residue protein sequence, read N- to C-terminus: Leucine--tRNA ligase (833 aa).

A 'HIGH' region motif is present at residues 41–52 (PYPSGAGLHVGH). The short motif at 610–614 (KMSKS) is the 'KMSKS' region element. Position 613 (lysine 613) interacts with ATP.

The protein belongs to the class-I aminoacyl-tRNA synthetase family.

It localises to the cytoplasm. It catalyses the reaction tRNA(Leu) + L-leucine + ATP = L-leucyl-tRNA(Leu) + AMP + diphosphate. In Streptococcus equi subsp. zooepidemicus (strain H70), this protein is Leucine--tRNA ligase.